A 256-amino-acid polypeptide reads, in one-letter code: Leucyl/phenylalanyl-tRNA--protein transferase (256 aa).

This sequence belongs to the L/F-transferase family.

It is found in the cytoplasm. It carries out the reaction N-terminal L-lysyl-[protein] + L-leucyl-tRNA(Leu) = N-terminal L-leucyl-L-lysyl-[protein] + tRNA(Leu) + H(+). The catalysed reaction is N-terminal L-arginyl-[protein] + L-leucyl-tRNA(Leu) = N-terminal L-leucyl-L-arginyl-[protein] + tRNA(Leu) + H(+). It catalyses the reaction L-phenylalanyl-tRNA(Phe) + an N-terminal L-alpha-aminoacyl-[protein] = an N-terminal L-phenylalanyl-L-alpha-aminoacyl-[protein] + tRNA(Phe). Functions in the N-end rule pathway of protein degradation where it conjugates Leu, Phe and, less efficiently, Met from aminoacyl-tRNAs to the N-termini of proteins containing an N-terminal arginine or lysine. The polypeptide is Leucyl/phenylalanyl-tRNA--protein transferase (Hydrogenovibrio crunogenus (strain DSM 25203 / XCL-2) (Thiomicrospira crunogena)).